Reading from the N-terminus, the 444-residue chain is ATP-dependent protease ATPase subunit HslU (444 aa).

ATP contacts are provided by residues Ile20 and 62 to 67; that span reads GVGKTE. Residues 130-158 are disordered; sequence EDRILDALVPPPRGASGEPERGEDNSARQ. Residues Asp257, Glu322, and Arg394 each coordinate ATP.

This sequence belongs to the ClpX chaperone family. HslU subfamily. As to quaternary structure, a double ring-shaped homohexamer of HslV is capped on each side by a ring-shaped HslU homohexamer. The assembly of the HslU/HslV complex is dependent on binding of ATP.

The protein localises to the cytoplasm. In terms of biological role, ATPase subunit of a proteasome-like degradation complex; this subunit has chaperone activity. The binding of ATP and its subsequent hydrolysis by HslU are essential for unfolding of protein substrates subsequently hydrolyzed by HslV. HslU recognizes the N-terminal part of its protein substrates and unfolds these before they are guided to HslV for hydrolysis. The sequence is that of ATP-dependent protease ATPase subunit HslU from Bordetella parapertussis (strain 12822 / ATCC BAA-587 / NCTC 13253).